The following is a 666-amino-acid chain: Calcium/calmodulin-dependent protein kinase type II subunit beta (666 aa).

The region spanning 14–272 is the Protein kinase domain; sequence YQLYEDIGKG…AHEALKHPWV (259 aa). Tyr17 bears the Phosphotyrosine mark. ATP-binding positions include 20 to 28 and Lys43; that span reads IGKGAFSVV. Residue Asp136 is the Proton acceptor of the active site. An autoinhibitory domain region spans residues 283–292; it reads HRQETVECLK. Phosphothreonine; by autocatalysis is present on Thr287. Residues 291–301 form a calmodulin-binding region; sequence LKKFNARRKLK. 2 positions are modified to phosphothreonine; by autocatalysis: Thr306 and Thr307. Residues 349–534 are disordered; the sequence is ADGVKPQTNS…IPGPLPTPSR (186 aa). Positions 354 to 369 are enriched in polar residues; that stretch reads PQTNSTKNSAAATSPK. Phosphoserine occurs at positions 367, 394, and 397. Thr400 and Thr401 each carry phosphothreonine. Residues 432–447 are compositionally biased toward pro residues; it reads LPCPSPAPFSPLPAPS. The segment covering 479–491 has biased composition (low complexity); the sequence is SPALLGPLSSPSP. Pro residues predominate over residues 514–531; it reads PVGPPPCPSPTIPGPLPT.

Belongs to the protein kinase superfamily. CAMK Ser/Thr protein kinase family. CaMK subfamily. In terms of assembly, CAMK2 is composed of 4 different chains: alpha (CAMK2A), beta (CAMK2B), gamma (CAMK2G), and delta (CAMK2D). The different isoforms assemble into homo- or heteromultimeric holoenzymes composed of 12 subunits with two hexameric rings stacked one on top of the other. Interacts with SYNGAP1 and CAMK2N2. Interacts with MPDZ. Interacts with FOXO3. Interacts (when in a kinase inactive state not associated with calmodulin) with ARC; leading to target ARC to inactive synapses. Interacts with CAMK2N1; this interaction requires CAMK2B activation by Ca(2+). In terms of processing, autophosphorylation of Thr-287 following activation by Ca(2+)/calmodulin. Phosphorylation of Thr-287 locks the kinase into an activated state. In terms of tissue distribution, widely expressed. Expressed in adult and fetal brain. Expression is slightly lower in fetal brain. Expressed in skeletal muscle.

It localises to the cytoplasm. The protein localises to the cytoskeleton. It is found in the microtubule organizing center. The protein resides in the centrosome. Its subcellular location is the sarcoplasmic reticulum membrane. It localises to the synapse. It catalyses the reaction L-seryl-[protein] + ATP = O-phospho-L-seryl-[protein] + ADP + H(+). The enzyme catalyses L-threonyl-[protein] + ATP = O-phospho-L-threonyl-[protein] + ADP + H(+). Its activity is regulated as follows. Activated by Ca(2+)/calmodulin. Binding of calmodulin results in conformational change that relieves intrasteric autoinhibition and allows autophosphorylation of Thr-287 which turns the kinase in a constitutively active form and confers to the kinase a Ca(2+)-independent activity. Functionally, calcium/calmodulin-dependent protein kinase that functions autonomously after Ca(2+)/calmodulin-binding and autophosphorylation, and is involved in dendritic spine and synapse formation, neuronal plasticity and regulation of sarcoplasmic reticulum Ca(2+) transport in skeletal muscle. In neurons, plays an essential structural role in the reorganization of the actin cytoskeleton during plasticity by binding and bundling actin filaments in a kinase-independent manner. This structural function is required for correct targeting of CaMK2A, which acts downstream of NMDAR to promote dendritic spine and synapse formation and maintain synaptic plasticity which enables long-term potentiation (LTP) and hippocampus-dependent learning. In developing hippocampal neurons, promotes arborization of the dendritic tree and in mature neurons, promotes dendritic remodeling. Also regulates the migration of developing neurons. Participates in the modulation of skeletal muscle function in response to exercise. In slow-twitch muscles, is involved in regulation of sarcoplasmic reticulum (SR) Ca(2+) transport and in fast-twitch muscle participates in the control of Ca(2+) release from the SR through phosphorylation of triadin, a ryanodine receptor-coupling factor, and phospholamban (PLN/PLB), an endogenous inhibitor of SERCA2A/ATP2A2. In response to interferon-gamma (IFN-gamma) stimulation, catalyzes phosphorylation of STAT1, stimulating the JAK-STAT signaling pathway. Phosphorylates reticulophagy regulator RETREG1 at 'Ser-151' under endoplasmic reticulum stress conditions which enhances RETREG1 oligomerization and its membrane scission and reticulophagy activity. The chain is Calcium/calmodulin-dependent protein kinase type II subunit beta (CAMK2B) from Homo sapiens (Human).